The following is an 831-amino-acid chain: Heat shock 70 kDa protein 14 (831 aa).

2 disordered regions span residues 503 to 579 (EEVE…KKKV) and 786 to 831 (TKPK…EGST). Positions 509-526 (VTKEHSEETTKMDSDKAS) are enriched in basic and acidic residues. S533 carries the phosphoserine modification.

Belongs to the heat shock protein 70 (TC 1.A.33) family. HSP110/SSE subfamily. In terms of assembly, interacts with HTT1 in both cytoplasm and nucleus. Constitutively expressed.

Its subcellular location is the cytoplasm. The protein localises to the nucleus. In terms of biological role, in cooperation with other chaperones, Hsp70s are key components that facilitate folding of de novo synthesized proteins, assist translocation of precursor proteins into organelles, and are responsible for degradation of damaged protein under stress conditions. This is Heat shock 70 kDa protein 14 (HSP70-14) from Arabidopsis thaliana (Mouse-ear cress).